Reading from the N-terminus, the 314-residue chain is Ribose-phosphate pyrophosphokinase (314 aa).

ATP is bound by residues 37-39 and 96-97; these read DGE and RQ. Mg(2+)-binding residues include His131 and Asp170. Lys194 is a catalytic residue. Residues Arg196, Asp220, and 224–228 contribute to the D-ribose 5-phosphate site; that span reads DTGGT.

The protein belongs to the ribose-phosphate pyrophosphokinase family. Class I subfamily. Homohexamer. Mg(2+) is required as a cofactor.

It localises to the cytoplasm. It catalyses the reaction D-ribose 5-phosphate + ATP = 5-phospho-alpha-D-ribose 1-diphosphate + AMP + H(+). It participates in metabolic intermediate biosynthesis; 5-phospho-alpha-D-ribose 1-diphosphate biosynthesis; 5-phospho-alpha-D-ribose 1-diphosphate from D-ribose 5-phosphate (route I): step 1/1. In terms of biological role, involved in the biosynthesis of the central metabolite phospho-alpha-D-ribosyl-1-pyrophosphate (PRPP) via the transfer of pyrophosphoryl group from ATP to 1-hydroxyl of ribose-5-phosphate (Rib-5-P). In Vibrio vulnificus (strain CMCP6), this protein is Ribose-phosphate pyrophosphokinase.